A 275-amino-acid chain; its full sequence is NH(3)-dependent NAD(+) synthetase (275 aa).

50-57 (GISGGVDS) is a binding site for ATP. Aspartate 56 provides a ligand contact to Mg(2+). Arginine 147 serves as a coordination point for deamido-NAD(+). Threonine 167 is a binding site for ATP. A Mg(2+)-binding site is contributed by glutamate 172. Residues lysine 180 and aspartate 187 each coordinate deamido-NAD(+). Positions 196 and 218 each coordinate ATP. 267 to 268 (HK) provides a ligand contact to deamido-NAD(+).

The protein belongs to the NAD synthetase family. In terms of assembly, homodimer.

The enzyme catalyses deamido-NAD(+) + NH4(+) + ATP = AMP + diphosphate + NAD(+) + H(+). It participates in cofactor biosynthesis; NAD(+) biosynthesis; NAD(+) from deamido-NAD(+) (ammonia route): step 1/1. Catalyzes the ATP-dependent amidation of deamido-NAD to form NAD. Uses ammonia as a nitrogen source. This is NH(3)-dependent NAD(+) synthetase from Pseudomonas putida (strain GB-1).